The sequence spans 125 residues: Large ribosomal subunit protein uL22c (125 aa).

It belongs to the universal ribosomal protein uL22 family. Part of the 50S ribosomal subunit.

The protein localises to the plastid. It localises to the chloroplast. This protein binds specifically to 23S rRNA. Its function is as follows. The globular domain of the protein is located near the polypeptide exit tunnel on the outside of the subunit, while an extended beta-hairpin is found that lines the wall of the exit tunnel in the center of the 70S ribosome. This Nuphar advena (Common spatterdock) protein is Large ribosomal subunit protein uL22c (rpl22).